Here is a 240-residue protein sequence, read N- to C-terminus: Ubiquinone biosynthesis O-methyltransferase (240 aa).

4 residues coordinate S-adenosyl-L-methionine: arginine 44, glycine 64, aspartate 85, and methionine 129.

It belongs to the methyltransferase superfamily. UbiG/COQ3 family.

The enzyme catalyses a 3-demethylubiquinol + S-adenosyl-L-methionine = a ubiquinol + S-adenosyl-L-homocysteine + H(+). It catalyses the reaction a 3-(all-trans-polyprenyl)benzene-1,2-diol + S-adenosyl-L-methionine = a 2-methoxy-6-(all-trans-polyprenyl)phenol + S-adenosyl-L-homocysteine + H(+). Its pathway is cofactor biosynthesis; ubiquinone biosynthesis. O-methyltransferase that catalyzes the 2 O-methylation steps in the ubiquinone biosynthetic pathway. This Escherichia coli O81 (strain ED1a) protein is Ubiquinone biosynthesis O-methyltransferase.